Consider the following 340-residue polypeptide: Protein B17 (340 aa).

This sequence belongs to the orthopoxvirus B17 protein family.

This Vaccinia virus (strain Copenhagen) (VACV) protein is Protein B17.